Reading from the N-terminus, the 137-residue chain is Keratin-associated protein 15-1 (137 aa).

It belongs to the PMG family. As to quaternary structure, interacts with hair keratins.

Its function is as follows. In the hair cortex, hair keratin intermediate filaments are embedded in an interfilamentous matrix, consisting of hair keratin-associated proteins (KRTAP), which are essential for the formation of a rigid and resistant hair shaft through their extensive disulfide bond cross-linking with abundant cysteine residues of hair keratins. The matrix proteins include the high-sulfur and high-glycine-tyrosine keratins. The chain is Keratin-associated protein 15-1 (KRTAP15-1) from Homo sapiens (Human).